The sequence spans 579 residues: Zinc finger protein 382 (579 aa).

Basic residues predominate over residues 1–12; sequence MGRPGRKPRGRA. The disordered stretch occupies residues 1-37; that stretch reads MGRPGRKPRGRARPGLFPFPKEELRQGGSSPANLNAM. A mediates interaction with TRIM28 region spans residues 12-135; sequence ARPGLFPFPK…DKPPKSIVII (124 aa). Residues 27–36 are compositionally biased toward polar residues; sequence GGSSPANLNA. Represses transcription regions lie at residues 40 to 81 and 105 to 240; these read GPVS…FISV and IFPS…PEQR. Positions 42-113 constitute a KRAB domain; the sequence is VSFKDVTVDF…RIFPSQSYLE (72 aa). The C2H2-type 1; degenerate zinc-finger motif lies at 241-263; it reads FEYNKCDSSFLMTGVEFPHGRAH. C2H2-type zinc fingers lie at residues 325-347, 353-375, 381-403, 409-431, 437-459, 465-487, 493-515, 521-543, and 549-571; these read FQCPYCGNSFRRKSYLIEHERIH, YICCQCGRAFRQKTALTLHEKTH, YLCVDCGKSFRQKATLTRHHKAH, YECTQCGSAFGKKSYLIDHQRTH, YQCTECGKAFIQKTTLTVHQRTH, YICSECGKSFCQKTTLTLHQRIH, YICSDCGKSFRQKAILTVHYRIH, NGCPQCGKAFSRKSNLIRHQKIH, and YECQECGKFFSCKSNLITHQKTH. The tract at residues 325-579 is required for transcriptional repression activity; probably mediates sequence-specific DNA-binding; sequence FQCPYCGNSF…THKTETMRFQ (255 aa).

It belongs to the krueppel C2H2-type zinc-finger protein family. In terms of assembly, interacts with TRIM28; enhances the transcriptional repressor activity.

The protein localises to the nucleus. In terms of biological role, functions as a sequence-specific transcriptional repressor. This Mus musculus (Mouse) protein is Zinc finger protein 382 (Znf382).